Reading from the N-terminus, the 123-residue chain is Large ribosomal subunit protein bL17 (123 aa).

It belongs to the bacterial ribosomal protein bL17 family. As to quaternary structure, part of the 50S ribosomal subunit. Contacts protein L32.

This is Large ribosomal subunit protein bL17 from Borreliella burgdorferi (strain ZS7) (Borrelia burgdorferi).